A 662-amino-acid polypeptide reads, in one-letter code: A-kinase anchor protein 10, mitochondrial (662 aa).

The transit peptide at 1–28 directs the protein to the mitochondrion; sequence MRGAGPSPRHSPRALRPDPGPAMSFFRR. Disordered regions lie at residues 1 to 55, 178 to 205, and 242 to 280; these read MRGA…SPQK, KQSS…ALDR, and GHSA…NSCS. Basic and acidic residues predominate over residues 32–43; the sequence is GKEQEKTLDVKS. Phosphoserine is present on residues serine 52 and serine 189. RGS domains are found at residues 125–369 and 379–505; these read TLEQ…CKYQ and YLAD…YKYL. Polar residues predominate over residues 256–280; the sequence is GSHQIPTDSQDSSSRLAVGSRNSCS. Serine 281 is subject to Phosphoserine. Residues 634–647 form a PKA-RII subunit binding region; the sequence is LAWKIAKMIVSDVM.

As to expression, highly expressed in testis, kidney and lung, followed by brain, skeletal muscle, liver, spleen and heart. Also expressed in brown adipose tissue and pancreas.

It localises to the mitochondrion. Its subcellular location is the membrane. It is found in the cytoplasm. In terms of biological role, differentially targeted protein that binds to type I and II regulatory subunits of protein kinase A and anchors them to the mitochondria or the plasma membrane. Although the physiological relevance between PKA and AKAPS with mitochondria is not fully understood, one idea is that BAD, a proapoptotic member, is phosphorylated and inactivated by mitochondria-anchored PKA. It cannot be excluded too that it may facilitate PKA as well as G protein signal transduction, by acting as an adapter for assembling multiprotein complexes. With its RGS domain, it could lead to the interaction to G-alpha proteins, providing a link between the signaling machinery and the downstream kinase. This is A-kinase anchor protein 10, mitochondrial (Akap10) from Mus musculus (Mouse).